A 476-amino-acid chain; its full sequence is MKILHVCSELYPLLKTGGLADVLGALPQAQNQIGLDARVLLPAYPAITAGIQNTQVVAEFDNFAGHVVLRYGEYNDVGIYLIDAPHLYGREGNPYHDAYYNDYGDNYKRFALLGWVGAELATGLDNWWRAEVVHAHDWHAGLCAAYLFNKGKPAKSVFTIHNLAYQGQFSYHHLYEIGLPTGMFHVEGLELFGQISYLKSGLFYSDASTAVSPTYAQEITTPEFAYGLQGLLSGLKAQGRLVGILNGVDENIWHPNVDQYIPHHYKLKYMAGKKKNKAELQAYFNLPQDESALAFVMVTRLTEQKGVDLLIESADEIVKQGGQLMILGSGAPHLEQGIRELAAQYPENIAVKIGYDEALSHLMVAGGDVILVPSRFEPCGLTQLYGLQYGTLPLVRKTGGLADTVVDSASESIKARTATGFVFENATPEALRHCLQRAFALWQKPRAWTMVRTDAMEQDFSWRKAAEQYRTLYERL.

Residue Lys15 participates in ADP-alpha-D-glucose binding.

The protein belongs to the glycosyltransferase 1 family. Bacterial/plant glycogen synthase subfamily.

It carries out the reaction [(1-&gt;4)-alpha-D-glucosyl](n) + ADP-alpha-D-glucose = [(1-&gt;4)-alpha-D-glucosyl](n+1) + ADP + H(+). It functions in the pathway glycan biosynthesis; glycogen biosynthesis. Synthesizes alpha-1,4-glucan chains using ADP-glucose. The protein is Glycogen synthase of Haemophilus influenzae (strain PittEE).